A 248-amino-acid polypeptide reads, in one-letter code: 2,3-bisphosphoglycerate-dependent phosphoglycerate mutase (248 aa).

Substrate-binding positions include 8–15 (RHGESTWN), 21–22 (TG), Arg-60, 87–90 (EKHY), Lys-98, 114–115 (RR), and 183–184 (GN). His-9 functions as the Tele-phosphohistidine intermediate in the catalytic mechanism. Glu-87 acts as the Proton donor/acceptor in catalysis.

This sequence belongs to the phosphoglycerate mutase family. BPG-dependent PGAM subfamily.

It catalyses the reaction (2R)-2-phosphoglycerate = (2R)-3-phosphoglycerate. It participates in carbohydrate degradation; glycolysis; pyruvate from D-glyceraldehyde 3-phosphate: step 3/5. Functionally, catalyzes the interconversion of 2-phosphoglycerate and 3-phosphoglycerate. This is 2,3-bisphosphoglycerate-dependent phosphoglycerate mutase from Elusimicrobium minutum (strain Pei191).